The sequence spans 298 residues: Spermidine synthase (298 aa).

In terms of domain architecture, PABS spans 13-248; that stretch reads DGWFREINNM…GSIGFVVASK (236 aa). Gln-44 lines the S-adenosyl 3-(methylsulfanyl)propylamine pocket. Tyr-74 is a putrescine binding site. S-adenosyl 3-(methylsulfanyl)propylamine contacts are provided by residues Gln-75, Asp-99, Asp-119, 150–151, and Asp-168; that span reads DG. Residue Asp-168 is the Proton acceptor of the active site. Putrescine contacts are provided by residues 168–171 and Tyr-236; that span reads DSSD.

It belongs to the spermidine/spermine synthase family.

The enzyme catalyses S-adenosyl 3-(methylsulfanyl)propylamine + putrescine = S-methyl-5'-thioadenosine + spermidine + H(+). The protein operates within amine and polyamine biosynthesis; spermidine biosynthesis; spermidine from putrescine: step 1/1. This Schizosaccharomyces pombe (strain 972 / ATCC 24843) (Fission yeast) protein is Spermidine synthase.